The following is a 277-amino-acid chain: MENTENSVDSKSIKNLEPKIIHGSQSMDSGISLDNSYKMDYPEMGLCIIINNKNFHKSTGMTSRSGTDVDAANLRETFRNLKYEVRNKNDLTREEIVELMRDVSKEDHSKRSSFVCVLLSHGEEGIIFGTNGPVDLKKITNFFRGDRCRSLTGKPKLFIIQACRGTELDCGIETDSGVDDDMACHKIPVEADFLYAYSTAPGYYSWRNSKDGSWFIQSLCAMLKQYADKLEFMHILTRVNRKVATEFESFSFDATFHAKKQIPCIVSMLTKELYFYH.

M1 is subject to N-acetylmethionine. Propeptides lie at residues 1 to 9 (MENTENSVD) and 10 to 28 (SKSI…QSMD). The segment covering 1–10 (MENTENSVDS) has biased composition (polar residues). Residues 1-20 (MENTENSVDSKSIKNLEPKI) form a disordered region. K11 is modified (N6-acetyllysine). Residues 11 to 20 (KSIKNLEPKI) are compositionally biased toward basic and acidic residues. Phosphoserine is present on S26. Residues H121 and C163 contribute to the active site. C163 carries the S-nitrosocysteine; in inhibited form modification.

Belongs to the peptidase C14A family. As to quaternary structure, heterotetramer that consists of two anti-parallel arranged heterodimers, each one formed by a 17 kDa (p17) and a 12 kDa (p12) subunit. Interacts with BIRC6/bruce. Post-translationally, cleavage by granzyme B, caspase-6, caspase-8 and caspase-10 generates the two active subunits. Additional processing of the propeptides is likely due to the autocatalytic activity of the activated protease. Active heterodimers between the small subunit of caspase-7 protease and the large subunit of caspase-3 also occur and vice versa. In terms of processing, S-nitrosylated on its catalytic site cysteine in unstimulated cell lines and denitrosylated upon activation of the Fas apoptotic pathway, associated with an increase in intracellular caspase activity. Fas therefore activates caspase-3 not only by inducing the cleavage of the caspase zymogen to its active subunits, but also by stimulating the denitrosylation of its active site thiol. Ubiquitinated by BIRC6; this activity is inhibited by DIABLO/SMAC.

It localises to the cytoplasm. It carries out the reaction Strict requirement for an Asp residue at positions P1 and P4. It has a preferred cleavage sequence of Asp-Xaa-Xaa-Asp-|- with a hydrophobic amino-acid residue at P2 and a hydrophilic amino-acid residue at P3, although Val or Ala are also accepted at this position.. With respect to regulation, inhibited by BIRC6; following inhibition of BIRC6-caspase binding by DIABLO/SMAC, BIRC6 is subjected to caspase cleavage, leading to an increase in active caspases. Its function is as follows. Involved in the activation cascade of caspases responsible for apoptosis execution. At the onset of apoptosis, it proteolytically cleaves poly(ADP-ribose) polymerase PARP1 at a '216-Asp-|-Gly-217' bond. Cleaves and activates sterol regulatory element binding proteins (SREBPs) between the basic helix-loop-helix leucine zipper domain and the membrane attachment domain. Cleaves and activates caspase-6, -7 and -9 (CASP6, CASP7 and CASP9, respectively). Cleaves and inactivates interleukin-18 (IL18). Triggers cell adhesion in sympathetic neurons through RET cleavage. Cleaves IL-1 beta between an Asp and an Ala, releasing the mature cytokine which is involved in a variety of inflammatory processes. Cleaves and inhibits serine/threonine-protein kinase AKT1 in response to oxidative stress. Acts as an inhibitor of type I interferon production during virus-induced apoptosis by mediating cleavage of antiviral proteins CGAS, IRF3 and MAVS, thereby preventing cytokine overproduction. Also involved in pyroptosis by mediating cleavage and activation of gasdermin-E (GSDME). Cleaves XRCC4 and phospholipid scramblase proteins XKR4, XKR8 and XKR9, leading to promote phosphatidylserine exposure on apoptotic cell surface. Cleaves BIRC6 following inhibition of BIRC6-caspase binding by DIABLO/SMAC. This is Caspase-3 (CASP3) from Pan troglodytes (Chimpanzee).